A 415-amino-acid polypeptide reads, in one-letter code: Cell wall mannoprotein PIR3 (415 aa).

An N-terminal signal peptide occupies residues 1–18; the sequence is MQYKKPLVVSALAATSLA. The propeptide occupies 19 to 67; sequence AYAPKDPWSTLTPSATYKGGITDYSSSFGIAIEAVATSASSVASSKAKR. PIR1/2/3 repeat units lie at residues 66–84, 92–109, 110–127, 128–145, 146–163, 164–181, 182–199, 200–217, 218–235, 236–253, 254–271, 272–288, and 289–307; these read KRAA…TTTA, AAAV…AKST, AAAA…AKST, AAAA…TTST, KAAA…ASKT, and TSGA…AEVK.

The protein belongs to the PIR protein family. In terms of processing, covalently linked to beta-1,3-glucan of the inner cell wall layer via an alkali-sensitive ester linkage between the gamma-carboxyl group of glutamic acids, arising from specific glutamines within the PIR1/2/3 repeats, and hydroxyl groups of glucoses of beta-1,3-glucan chains. O-glycosylated. Extensively O-mannosylated.

The protein localises to the secreted. Its subcellular location is the cell wall. In terms of biological role, component of the outer cell wall layer. Required for stability of the cell wall and for optimal growth. Required for resistance against several antifungal and cell wall-perturbing agents. This chain is Cell wall mannoprotein PIR3 (PIR3), found in Saccharomyces cerevisiae (strain YJM789) (Baker's yeast).